Here is a 489-residue protein sequence, read N- to C-terminus: Rhamnulokinase (489 aa).

Position 13-17 (alanine 13–arginine 17) interacts with ATP. Cysteines 68 and 222 form a disulfide. Substrate is bound by residues glycine 83 and histidine 236–threonine 238. Aspartate 237 (proton acceptor) is an active-site residue. Residue threonine 259 participates in ATP binding. Residue asparagine 296 participates in substrate binding. Residue glutamine 304 coordinates ATP. A disulfide bond links cysteine 353 and cysteine 370. Glycine 402 is a binding site for ATP. Residues cysteine 413 and cysteine 417 are joined by a disulfide bond.

This sequence belongs to the rhamnulokinase family. As to quaternary structure, monomer. Mg(2+) serves as cofactor.

The catalysed reaction is L-rhamnulose + ATP = L-rhamnulose 1-phosphate + ADP + H(+). It participates in carbohydrate degradation; L-rhamnose degradation; glycerone phosphate from L-rhamnose: step 2/3. Involved in the catabolism of L-rhamnose (6-deoxy-L-mannose). Catalyzes the transfer of the gamma-phosphate group from ATP to the 1-hydroxyl group of L-rhamnulose to yield L-rhamnulose 1-phosphate. This is Rhamnulokinase from Escherichia coli O17:K52:H18 (strain UMN026 / ExPEC).